A 324-amino-acid chain; its full sequence is Chorismate mutase 1, chloroplastic (324 aa).

A chloroplast-targeting transit peptide spans 1-56 (METQLLRFPSHTITSSITTNSSRNTTPFLPHKKWSHFVKFQLVNSSSSIKHGIRPL). Arginine 70 contributes to the L-phenylalanine binding site. One can recognise a Chorismate mutase domain in the interval 70–324 (RVDETESYTL…QVQYLLRRLD (255 aa)). Residues arginine 141 and 202–205 (NYGS) contribute to the L-tyrosine site. Residue 202–205 (NYGS) coordinates L-phenylalanine.

In terms of assembly, homodimer. As to expression, mostly expressed in petal tubes and petal limbs, and, to a lower extent, in stigmas, anthers, sepals, roots, stems and leaves.

It is found in the plastid. Its subcellular location is the chloroplast stroma. The catalysed reaction is chorismate = prephenate. Its pathway is metabolic intermediate biosynthesis; prephenate biosynthesis; prephenate from chorismate: step 1/1. With respect to regulation, allosterically activated by tryptophan but not by tyrosine and phenylalanine. Component of the floral volatile benzenoid/phenylpropanoid (FVBPs) biosynthetic pathway. Mediates the conversion of chorismate to prephenate, thus coupling metabolites from the shikimate pathway to the synthesis of FVBPs in the corolla. The polypeptide is Chorismate mutase 1, chloroplastic (Petunia hybrida (Petunia)).